Consider the following 299-residue polypeptide: ATP phosphoribosyltransferase (299 aa).

The protein belongs to the ATP phosphoribosyltransferase family. Long subfamily. As to quaternary structure, equilibrium between an active dimeric form, an inactive hexameric form and higher aggregates. Interconversion between the various forms is largely reversible and is influenced by the natural substrates and inhibitors of the enzyme. It depends on Mg(2+) as a cofactor.

The protein resides in the cytoplasm. It catalyses the reaction 1-(5-phospho-beta-D-ribosyl)-ATP + diphosphate = 5-phospho-alpha-D-ribose 1-diphosphate + ATP. The protein operates within amino-acid biosynthesis; L-histidine biosynthesis; L-histidine from 5-phospho-alpha-D-ribose 1-diphosphate: step 1/9. Feedback inhibited by histidine. In terms of biological role, catalyzes the condensation of ATP and 5-phosphoribose 1-diphosphate to form N'-(5'-phosphoribosyl)-ATP (PR-ATP). Has a crucial role in the pathway because the rate of histidine biosynthesis seems to be controlled primarily by regulation of HisG enzymatic activity. The protein is ATP phosphoribosyltransferase of Yersinia pseudotuberculosis serotype O:1b (strain IP 31758).